Consider the following 156-residue polypeptide: Cyanate hydratase (156 aa).

Residues Arg-96, Glu-99, and Ser-122 contribute to the active site.

It belongs to the cyanase family.

It carries out the reaction cyanate + hydrogencarbonate + 3 H(+) = NH4(+) + 2 CO2. Its function is as follows. Catalyzes the reaction of cyanate with bicarbonate to produce ammonia and carbon dioxide. This chain is Cyanate hydratase, found in Escherichia coli O9:H4 (strain HS).